A 127-amino-acid polypeptide reads, in one-letter code: Gamma-synuclein (127 aa).

Repeat copies occupy residues 20–30 and 31–41. Residues 20–67 are 4 X 11 AA tandem repeats of [EGSA]-K-T-K-[EQ]-[GQ]-V-X(4); it reads EKTKQGVTEAAEKTKEGVMYVGAKTKENVVQSVTSVAEKTKEQANAVS. Residues 42 to 56 form a 3; approximate repeat; that stretch reads AKTKENVVQSVTSVA. The stretch at 57–67 is repeat 4; sequence EKTKEQANAVS. A phosphoserine mark is found at Ser-67 and Ser-72. The tract at residues 96-127 is disordered; sequence RKEDLRPSAPQQEGEASKEKEEVAEEAQSGGD. Ser-124 is subject to Phosphoserine; by BARK1, CaMK2 and CK2.

Belongs to the synuclein family. In terms of assembly, may be a centrosome-associated protein. Interacts with MYOC; affects its secretion and its aggregation. Phosphorylated. Phosphorylation by GRK5 appears to occur on residues distinct from the residue phosphorylated by other kinases. Highly expressed in brain, particularly in the substantia nigra. Also expressed in the corpus callosum, heart, skeletal muscle, ovary, testis, colon and spleen. Weak expression in pancreas, kidney and lung.

The protein resides in the cytoplasm. Its subcellular location is the perinuclear region. It is found in the cytoskeleton. The protein localises to the microtubule organizing center. It localises to the centrosome. The protein resides in the spindle. Plays a role in neurofilament network integrity. May be involved in modulating axonal architecture during development and in the adult. In vitro, increases the susceptibility of neurofilament-H to calcium-dependent proteases. May also function in modulating the keratin network in skin. Activates the MAPK and Elk-1 signal transduction pathway. This chain is Gamma-synuclein (SNCG), found in Homo sapiens (Human).